Consider the following 901-residue polypeptide: Core protein VP3 (901 aa).

Belongs to the orbivirus VP3 family.

It localises to the virion. Functionally, the VP3 protein is one of the five proteins (with VP1, VP4, VP6 and VP7) which form the inner capsid of the virus. This is Core protein VP3 (Segment-3) from Bluetongue virus 10 (isolate USA) (BTV 10).